The following is an 835-amino-acid chain: Cap-specific mRNA (nucleoside-2'-O-)-methyltransferase 1 (835 aa).

Positions 1–66 (MKRRNDSECT…TEGKQRSSDS (66 aa)) are disordered. Residues 2-19 (KRRNDSECTAPLKKQKKR) carry the Bipartite nuclear localization signal motif. S28, S31, S53, S66, and S91 each carry phosphoserine. Basic and acidic residues predominate over residues 57–66 (TEGKQRSSDS). The region spanning 87–133 (YNSVSQKLMAKMGFKEGEGLGKYSQGRKDIVEASNQKGRRGLGLTLQ) is the G-patch domain. N6-acetyllysine is present on K108. Residues 203-207 (KSVFD) and R218 contribute to the substrate site. The RrmJ-type SAM-dependent 2'-O-MTase domain maps to 231-450 (FFLNRAAMKM…ERYVVCKGLK (220 aa)). S-adenosyl-L-methionine is bound at residue N234. Residue K239 is part of the active site. S-adenosyl-L-methionine-binding positions include 277-283 (CAGPGGF) and 335-336 (DI). D364 is a catalytic residue. 374–376 (NLQ) lines the substrate pocket. Residue K404 is the Proton acceptor of the active site. N439 serves as a coordination point for substrate. Positions 727 to 835 (SSGTPKLSYT…VLSFIQTHSA (109 aa)) are interaction with POLR2A. Residues 752-786 (RTVNEPWTMGFSKSFKRKFFYNKKTKNSTFDLPAD) enclose the WW domain.

As to quaternary structure, interacts with POLR2A (via C-terminus).

It localises to the nucleus. It catalyses the reaction a 5'-end (N(7)-methyl 5'-triphosphoguanosine)-ribonucleoside in mRNA + S-adenosyl-L-methionine = a 5'-end (N(7)-methyl 5'-triphosphoguanosine)-(2'-O-methyl-ribonucleoside) in mRNA + S-adenosyl-L-homocysteine + H(+). Its function is as follows. S-adenosyl-L-methionine-dependent methyltransferase that mediates mRNA cap1 2'-O-ribose methylation to the 5'-cap structure of mRNAs. Methylates the ribose of the first nucleotide of a m(7)GpppG-capped mRNA and small nuclear RNA (snRNA) to produce m(7)GpppRm (cap1). Displays a preference for cap0 transcripts. Cap1 modification is linked to higher levels of translation. May be involved in the interferon response pathway. The chain is Cap-specific mRNA (nucleoside-2'-O-)-methyltransferase 1 (CMTR1) from Bos taurus (Bovine).